The primary structure comprises 141 residues: Nucleoside triphosphatase NudI (141 aa).

The 141-residue stretch at 1-141 (MRQRTIVCPL…RVTLSQKGLL (141 aa)) folds into the Nudix hydrolase domain. The Nudix box motif lies at 38 to 59 (GGVEPVERIEEALRREIREELG).

This sequence belongs to the Nudix hydrolase family. NudI subfamily. As to quaternary structure, monomer. The cofactor is Mg(2+).

The catalysed reaction is a ribonucleoside 5'-triphosphate + H2O = a ribonucleoside 5'-phosphate + diphosphate + H(+). It catalyses the reaction a 2'-deoxyribonucleoside 5'-triphosphate + H2O = a 2'-deoxyribonucleoside 5'-phosphate + diphosphate + H(+). The enzyme catalyses dUTP + H2O = dUMP + diphosphate + H(+). It carries out the reaction dTTP + H2O = dTMP + diphosphate + H(+). The catalysed reaction is dCTP + H2O = dCMP + diphosphate + H(+). Its function is as follows. Catalyzes the hydrolysis of nucleoside triphosphates, with a preference for pyrimidine deoxynucleoside triphosphates (dUTP, dTTP and dCTP). In Klebsiella pneumoniae (strain 342), this protein is Nucleoside triphosphatase NudI.